Consider the following 153-residue polypeptide: Putative type II secretion system protein M (153 aa).

At methionine 1–isoleucine 16 the chain is on the cytoplasmic side. A helical membrane pass occupies residues valine 17–isoleucine 37. At aspartate 38–glutamine 153 the chain is on the periplasmic side.

Belongs to the GSP M family. As to quaternary structure, type II secretion system is composed of four main components: the outer membrane complex, the inner membrane complex, the cytoplasmic secretion ATPase and the periplasm-spanning pseudopilus. Forms homodimers. Interacts with GspL. Interacts with GspE and GspF.

It is found in the cell inner membrane. Inner membrane component of the type II secretion system required for the energy-dependent secretion of extracellular factors such as proteases and toxins from the periplasm. Plays a role in the complex assembly and recruits GspL resulting in a stable complex in the inner membrane. Provides thus a link between the energy-providing GspE protein in the cytoplasm and the rest of the T2SS machinery. The chain is Putative type II secretion system protein M (gspM) from Escherichia coli (strain K12).